A 608-amino-acid chain; its full sequence is CTP synthase (608 aa).

An amidoligase domain region spans residues 1 to 271 (MGQAHITKHI…DAYVVRRLGL (271 aa)). Position 18 (Ser-18) interacts with CTP. Ser-18 serves as a coordination point for UTP. ATP contacts are provided by residues 19–24 (SLGKGL) and Asp-76. Mg(2+) contacts are provided by Asp-76 and Glu-145. CTP is bound by residues 152-154 (DIE), 192-197 (KTKPTQ), and Lys-228. UTP contacts are provided by residues 192 to 197 (KTKPTQ) and Lys-228. The region spanning 296 to 545 (TIAIVGKYVD…VAAAVAHADR (250 aa)) is the Glutamine amidotransferase type-1 domain. L-glutamine is bound at residue Gly-359. Residue Cys-386 is the Nucleophile; for glutamine hydrolysis of the active site. L-glutamine is bound by residues 387–390 (LGLQ), Glu-410, and Arg-471. Catalysis depends on residues His-518 and Glu-520. The interval 550–608 (LPVDLPSEDAPTPENGVPENGAAQTRGVTAGRSGGSIRRGASASRPSVSSNGTAALVSP) is disordered. Positions 584-594 (GSIRRGASASR) are enriched in low complexity.

The protein belongs to the CTP synthase family. As to quaternary structure, homotetramer.

It carries out the reaction UTP + L-glutamine + ATP + H2O = CTP + L-glutamate + ADP + phosphate + 2 H(+). The catalysed reaction is L-glutamine + H2O = L-glutamate + NH4(+). It catalyses the reaction UTP + NH4(+) + ATP = CTP + ADP + phosphate + 2 H(+). It functions in the pathway pyrimidine metabolism; CTP biosynthesis via de novo pathway; CTP from UDP: step 2/2. Allosterically activated by GTP, when glutamine is the substrate; GTP has no effect on the reaction when ammonia is the substrate. The allosteric effector GTP functions by stabilizing the protein conformation that binds the tetrahedral intermediate(s) formed during glutamine hydrolysis. Inhibited by the product CTP, via allosteric rather than competitive inhibition. Its function is as follows. Catalyzes the ATP-dependent amination of UTP to CTP with either L-glutamine or ammonia as the source of nitrogen. Regulates intracellular CTP levels through interactions with the four ribonucleotide triphosphates. The protein is CTP synthase of Frankia casuarinae (strain DSM 45818 / CECT 9043 / HFP020203 / CcI3).